The sequence spans 545 residues: Chaperonin GroEL (545 aa).

Residues 29-32 (TMGP), K50, 86-90 (DGTTT), G414, 477-479 (DAA), and D493 each bind ATP.

This sequence belongs to the chaperonin (HSP60) family. Forms a cylinder of 14 subunits composed of two heptameric rings stacked back-to-back. Interacts with the co-chaperonin GroES.

It is found in the cytoplasm. It carries out the reaction ATP + H2O + a folded polypeptide = ADP + phosphate + an unfolded polypeptide.. Together with its co-chaperonin GroES, plays an essential role in assisting protein folding. The GroEL-GroES system forms a nano-cage that allows encapsulation of the non-native substrate proteins and provides a physical environment optimized to promote and accelerate protein folding. This chain is Chaperonin GroEL, found in Campylobacter jejuni (strain RM1221).